Reading from the N-terminus, the 62-residue chain is UPF0291 protein CLM_2971 (62 aa).

The protein belongs to the UPF0291 family.

It localises to the cytoplasm. This Clostridium botulinum (strain Kyoto / Type A2) protein is UPF0291 protein CLM_2971.